Consider the following 191-residue polypeptide: UPF0312 protein Pmen_0419 (191 aa).

Residues 1–22 form the signal peptide; it reads MLKNALAALVLGSALIGGQAMA.

It belongs to the UPF0312 family. Type 1 subfamily.

It is found in the periplasm. The polypeptide is UPF0312 protein Pmen_0419 (Ectopseudomonas mendocina (strain ymp) (Pseudomonas mendocina)).